Here is a 207-residue protein sequence, read N- to C-terminus: MAFTELKHPLIIDKLSRMRKKETSSKDFRENLNEIAQLMVYEIFRDLELEAIEIETPMTKTVGYTIDKPIVLVPILRAGIGMLDGIQKLIPTARIAHIGLYRDEETLEIHQYFAKKTESIDESYVIIVDPMLATGGSANKAIDIVKGWGVKNIKFVCLVAVEPGISNVLEKHPDVEIYAASKDEKLSDKGYIIPGLGDAGDRIFGTK.

Residues arginine 77, arginine 102, and 129–137 (DPMLATGGS) each bind 5-phospho-alpha-D-ribose 1-diphosphate. Residues isoleucine 192 and 197–199 (GDA) each bind uracil. Aspartate 198 serves as a coordination point for 5-phospho-alpha-D-ribose 1-diphosphate.

The protein belongs to the UPRTase family. It depends on Mg(2+) as a cofactor.

It carries out the reaction UMP + diphosphate = 5-phospho-alpha-D-ribose 1-diphosphate + uracil. It participates in pyrimidine metabolism; UMP biosynthesis via salvage pathway; UMP from uracil: step 1/1. Allosterically activated by GTP. Functionally, catalyzes the conversion of uracil and 5-phospho-alpha-D-ribose 1-diphosphate (PRPP) to UMP and diphosphate. The polypeptide is Uracil phosphoribosyltransferase (Mesoplasma florum (strain ATCC 33453 / NBRC 100688 / NCTC 11704 / L1) (Acholeplasma florum)).